The following is a 180-amino-acid chain: MTETSTVSIASSAIVCVEADIKGEVIIKEGCVVHPFVVFDATKGPIYVGENNIFEEYAVIRNNSDGQPMIIGDWNIFQVHSKSSAKYVGSRNVIGVHAVLEDGCSVSDDCSVGAKCTVFSHQNLEPSVSVYAATNLSRTTKTPNMTSPHQIEFLRKILPSYHHLYGKKKAVATASASAAQ.

This sequence belongs to the dynactin subunits 5/6 family. Dynactin subunit 6 subfamily. Subunit of dynactin, a multiprotein complex part of a tripartite complex with dynein and a adapter, such as BICDL1, BICD2 or HOOK3. The dynactin complex is built around ACTR1A/ACTB filament and consists of an actin-related filament composed of a shoulder domain, a pointed end and a barbed end.

Its subcellular location is the cytoplasm. It localises to the cytoskeleton. Functionally, part of the dynactin complex that activates the molecular motor dynein for ultra-processive transport along microtubules. This Caenorhabditis elegans protein is Dynactin subunit 6 (dnc-6).